Consider the following 972-residue polypeptide: Aminopeptidase Ey (972 aa).

The Cytoplasmic segment spans residues 2–10; that stretch reads AAGFFISKS. The chain crosses the membrane as a helical; Signal-anchor for type II membrane protein span at residues 11-31; it reads VGIVGIVLALGAVATIIALSV. The Extracellular segment spans residues 32 to 972; that stretch reads VYAQEKNKSS…AWFRAETASS (941 aa). Residues 33-72 are cytosolic Ser/Thr-rich junction; that stretch reads YAQEKNKSSGGSGGSDTTSTTTASTTTTSTTTASTTAAPN. Residues 37-77 form a disordered region; that stretch reads KNKSSGGSGGSDTTSTTTASTTTTSTTTASTTAAPNNPWNR. Residue Asn38 is glycosylated (N-linked (GlcNAc...) asparagine). Low complexity predominate over residues 47-70; it reads SDTTSTTTASTTTTSTTTASTTAA. The interval 73 to 967 is metalloprotease; sequence NPWNRWRLPT…KEVVHAWFRA (895 aa). Residues Asn110, Asn132, Asn147, Asn206, Asn269, and Asn296 are each glycosylated (N-linked (GlcNAc...) asparagine). Residue 355 to 359 coordinates substrate; the sequence is GAMEN. His391 provides a ligand contact to Zn(2+). The active-site Proton acceptor is the Glu392. 2 residues coordinate Zn(2+): His395 and Glu414. Residues Asn513, Asn574, Asn584, Asn628, Asn684, and Asn742 are each glycosylated (N-linked (GlcNAc...) asparagine). Cys764 and Cys771 are joined by a disulfide. The N-linked (GlcNAc...) asparagine glycan is linked to Asn785. A disulfide bond links Cys801 and Cys837.

The protein belongs to the peptidase M1 family. As to quaternary structure, homodimer. It depends on Zn(2+) as a cofactor. As to expression, detected in the plasma and granule fractions of egg yolk (at protein level).

It is found in the cell membrane. The enzyme catalyses Differs from other aminopeptidases in broad specificity for amino acids in the P1 position and the ability to hydrolyze peptides of four or five residues that contain Pro in the P1' position.. Its function is as follows. Broad specificity aminopeptidase. Degrades a variety of peptides possessing various N-terminal amino acids including hydrophobic, basic and acidic amino acids. Preferentially hydrolyzes small peptides consisting of 4 or 5 amino acids. Hydrolyzes the N-terminal Xaa-Pro bonds in the chicken brain peptide Leu-Pro-Leu-Arg-PheNH2, the substance P fragment Arg-Pro-Lys-Pro and the bradykinin fragment Arg-Pro-Pro-Gly-Phe. Hydrolyzes the N-formylated peptides fMet-Leu-Phe, fMet-Ala-Gly-Ser-Glu and fMet-Nle-Leu-Phe-Nle-Tyr-Lys, but does not hydrolyze peptides with acetylation or pyroglutamic acid at N-terminus. Does not hydrolyze large peptides such as complete substance P, bradykinin or schistoFLRFamide. The sequence is that of Aminopeptidase Ey (ANPEP) from Gallus gallus (Chicken).